The following is a 220-amino-acid chain: MKIDILDKGFVELVDVMGNDLSAVRAARVSFDMGLKDEERDRHLIEYLMKHGHETPFEHIVFTFHVKAPIFVARQWFRHRIASYNELSGRYSKLSYEFYIPSPERLEGYKTTIPPEQVTEKISEIVDKAYRTYLELIESGVPREVARIVLPLNLYTRFFWTVNARSLMNFLNLRADSHAQWEIQQYALAIARIFKEKCPWTFEAFLKYAYKGDILKEVQV.

The ThyX domain maps to Met-1 to Tyr-208. FAD-binding positions include Thr-55, Arg-78–Arg-80, and Glu-86. DUMP contacts are provided by residues Gln-75–Arg-78, Glu-86–Arg-90, and Arg-147. The ThyX motif signature appears at Arg-78–Ser-88. Residues Asn-163 to Arg-165 and Asn-169 contribute to the FAD site. Arg-174 is a binding site for dUMP. The active-site Involved in ionization of N3 of dUMP, leading to its activation is Arg-174.

This sequence belongs to the thymidylate synthase ThyX family. As to quaternary structure, homotetramer. FAD serves as cofactor.

It catalyses the reaction dUMP + (6R)-5,10-methylene-5,6,7,8-tetrahydrofolate + NADPH + H(+) = dTMP + (6S)-5,6,7,8-tetrahydrofolate + NADP(+). It participates in pyrimidine metabolism; dTTP biosynthesis. In terms of biological role, catalyzes the reductive methylation of 2'-deoxyuridine-5'-monophosphate (dUMP) to 2'-deoxythymidine-5'-monophosphate (dTMP) while utilizing 5,10-methylenetetrahydrofolate (mTHF) as the methyl donor, and NADPH and FADH(2) as the reductant. This is Flavin-dependent thymidylate synthase from Thermotoga petrophila (strain ATCC BAA-488 / DSM 13995 / JCM 10881 / RKU-1).